We begin with the raw amino-acid sequence, 390 residues long: Galactokinase (390 aa).

Substrate is bound at residue glutamate 33–aspartate 36. ATP is bound by residues serine 67 and glycine 124–serine 130. Serine 130 and glutamate 162 together coordinate Mg(2+). The Proton acceptor role is filled by aspartate 174. Tyrosine 224 contacts substrate.

This sequence belongs to the GHMP kinase family. GalK subfamily.

It localises to the cytoplasm. The catalysed reaction is alpha-D-galactose + ATP = alpha-D-galactose 1-phosphate + ADP + H(+). It participates in carbohydrate metabolism; galactose metabolism. Catalyzes the transfer of the gamma-phosphate of ATP to D-galactose to form alpha-D-galactose-1-phosphate (Gal-1-P). The protein is Galactokinase of Exiguobacterium sibiricum (strain DSM 17290 / CCUG 55495 / CIP 109462 / JCM 13490 / 255-15).